Here is an 83-residue protein sequence, read N- to C-terminus: uncharacterized protein (83 aa).

This sequence belongs to the BolA/IbaG family.

This is an uncharacterized protein from Acinetobacter guillouiae (Acinetobacter genomosp. 11).